The primary structure comprises 656 residues: F-box/LRR-repeat protein 10 (656 aa).

The 47-residue stretch at 20–66 folds into the F-box domain; the sequence is ERSLDLLPAALLETIMTKLDVASLCSLASTCKTLKSCVTRVLTFTPN. LRR repeat units lie at residues 71-96, 120-145, 151-176, 194-221, 243-268, 277-301, 310-335, 336-361, 362-387, 388-412, 413-437, 439-463, 464-491, 492-517, 518-551, and 552-578; these read NVSLSMETVRPLLFPNQQLSSLKLDC, CRDFSGDLISEIGRKCKDLRLLCLGS, GRSISRCALEDLLNGCSHLEVLALMF, SDRLTHLELGHITSRMMTQLLTSTEISG, VDCITDAVVKAISKSLPSLIDLDIRD, VSDLTDFGLHEINQNGKLKHLSLIR, FRRVSDQGMLFLADKCLGMETICLGG, FCRVTDAGFKTILHSCASLSKFSIYH, GPKLTDLVFHDILATTLSLSHVSLRR, CHLLTDHAIQKLASSLKLENLDLRG, CRNLRDETLTAVSHLPKLKVLLLDG, DISDTGLSYLKEGVLDSLVSLSVRG, CRNLTDKFMSTLFDGSSKLALRELDLSN, LPNLTDAAIFALAKSGAPITKLQLRE, CRLIGDASVMALASTRVYEDECPGSSLCLLDLYD, and CGGITQLSFKWLKKPFFPRLKWLGITG. Positions 632-656 are disordered; it reads ILGDEGDVEMEDAEDESEEDASEED.

This Arabidopsis thaliana (Mouse-ear cress) protein is F-box/LRR-repeat protein 10 (FBL10).